The primary structure comprises 454 residues: 3-phosphoshikimate 1-carboxyvinyltransferase (454 aa).

The 3-phosphoshikimate site is built by lysine 39, serine 40, and arginine 44. Lysine 39 is a binding site for phosphoenolpyruvate. Glycine 112 and arginine 140 together coordinate phosphoenolpyruvate. Residues serine 185, glutamine 187, aspartate 333, and lysine 360 each contribute to the 3-phosphoshikimate site. A phosphoenolpyruvate-binding site is contributed by glutamine 187. Catalysis depends on aspartate 333, which acts as the Proton acceptor. Positions 364 and 405 each coordinate phosphoenolpyruvate.

The protein belongs to the EPSP synthase family. In terms of assembly, monomer.

The protein resides in the cytoplasm. It catalyses the reaction 3-phosphoshikimate + phosphoenolpyruvate = 5-O-(1-carboxyvinyl)-3-phosphoshikimate + phosphate. It participates in metabolic intermediate biosynthesis; chorismate biosynthesis; chorismate from D-erythrose 4-phosphate and phosphoenolpyruvate: step 6/7. Functionally, catalyzes the transfer of the enolpyruvyl moiety of phosphoenolpyruvate (PEP) to the 5-hydroxyl of shikimate-3-phosphate (S3P) to produce enolpyruvyl shikimate-3-phosphate and inorganic phosphate. The chain is 3-phosphoshikimate 1-carboxyvinyltransferase from Xylella fastidiosa (strain 9a5c).